The following is a 165-amino-acid chain: 2-C-methyl-D-erythritol 2,4-cyclodiphosphate synthase (165 aa).

Positions 12 and 14 each coordinate a divalent metal cation. 4-CDP-2-C-methyl-D-erythritol 2-phosphate-binding positions include 12-14 (DIH) and 38-39 (HS). His-46 contributes to the a divalent metal cation binding site. 4-CDP-2-C-methyl-D-erythritol 2-phosphate is bound by residues 60-62 (DIG), 136-139 (TTNE), and Arg-146.

It belongs to the IspF family. As to quaternary structure, homotrimer. Requires a divalent metal cation as cofactor.

It carries out the reaction 4-CDP-2-C-methyl-D-erythritol 2-phosphate = 2-C-methyl-D-erythritol 2,4-cyclic diphosphate + CMP. Its pathway is isoprenoid biosynthesis; isopentenyl diphosphate biosynthesis via DXP pathway; isopentenyl diphosphate from 1-deoxy-D-xylulose 5-phosphate: step 4/6. Involved in the biosynthesis of isopentenyl diphosphate (IPP) and dimethylallyl diphosphate (DMAPP), two major building blocks of isoprenoid compounds. Catalyzes the conversion of 4-diphosphocytidyl-2-C-methyl-D-erythritol 2-phosphate (CDP-ME2P) to 2-C-methyl-D-erythritol 2,4-cyclodiphosphate (ME-CPP) with a corresponding release of cytidine 5-monophosphate (CMP). This Nostoc sp. (strain PCC 7120 / SAG 25.82 / UTEX 2576) protein is 2-C-methyl-D-erythritol 2,4-cyclodiphosphate synthase.